Here is a 71-residue protein sequence, read N- to C-terminus: Small ribosomal subunit protein bS21 (71 aa).

Residues 39–71 are disordered; the sequence is EKPTTVRKRAKAAAQKRHAKKLARENARRVRLY. Residues 43–59 show a composition bias toward basic residues; the sequence is TVRKRAKAAAQKRHAKK. Positions 60 to 71 are enriched in basic and acidic residues; that stretch reads LARENARRVRLY.

This sequence belongs to the bacterial ribosomal protein bS21 family.

The sequence is that of Small ribosomal subunit protein bS21 from Vibrio atlanticus (strain LGP32) (Vibrio splendidus (strain Mel32)).